We begin with the raw amino-acid sequence, 189 residues long: Peptidyl-tRNA hydrolase (189 aa).

A tRNA-binding site is contributed by Tyr-14. Residue His-19 is the Proton acceptor of the active site. Residues Phe-64, Asn-66, and Asn-112 each coordinate tRNA.

It belongs to the PTH family. As to quaternary structure, monomer.

Its subcellular location is the cytoplasm. The catalysed reaction is an N-acyl-L-alpha-aminoacyl-tRNA + H2O = an N-acyl-L-amino acid + a tRNA + H(+). Hydrolyzes ribosome-free peptidyl-tRNAs (with 1 or more amino acids incorporated), which drop off the ribosome during protein synthesis, or as a result of ribosome stalling. Functionally, catalyzes the release of premature peptidyl moieties from peptidyl-tRNA molecules trapped in stalled 50S ribosomal subunits, and thus maintains levels of free tRNAs and 50S ribosomes. This chain is Peptidyl-tRNA hydrolase, found in Zymomonas mobilis subsp. mobilis (strain ATCC 31821 / ZM4 / CP4).